The primary structure comprises 300 residues: Protoheme IX farnesyltransferase (300 aa).

9 consecutive transmembrane segments (helical) span residues 24 to 44 (VTQLAVFCAVIGMFLATPGMV), 46 to 66 (WHVLIGGTVGIWLLAGAAFAI), 94 to 114 (PQILLFSAVLGSVGAWTLYTF), 118 to 138 (LTMWLTIATFVGYAVIYTLLL), 146 to 166 (IVIGGASGAMPPALGWAAVTG), 172 to 192 (AWILVLIIFVWTPPHFWVLAL), 217 to 237 (LHILLYTVILFAVTLMPFISG), 239 to 259 (SGAVYLTSAVLLGAVFLAYAW), and 278 to 298 (IVYLSLLFAALLVDHYARPLL).

This sequence belongs to the UbiA prenyltransferase family. Protoheme IX farnesyltransferase subfamily.

The protein localises to the cell inner membrane. It catalyses the reaction heme b + (2E,6E)-farnesyl diphosphate + H2O = Fe(II)-heme o + diphosphate. The protein operates within porphyrin-containing compound metabolism; heme O biosynthesis; heme O from protoheme: step 1/1. Converts heme B (protoheme IX) to heme O by substitution of the vinyl group on carbon 2 of heme B porphyrin ring with a hydroxyethyl farnesyl side group. The protein is Protoheme IX farnesyltransferase of Burkholderia cenocepacia (strain HI2424).